The sequence spans 122 residues: Large ribosomal subunit protein uL14 (122 aa).

Belongs to the universal ribosomal protein uL14 family. Part of the 50S ribosomal subunit. Forms a cluster with proteins L3 and L19. In the 70S ribosome, L14 and L19 interact and together make contacts with the 16S rRNA in bridges B5 and B8.

In terms of biological role, binds to 23S rRNA. Forms part of two intersubunit bridges in the 70S ribosome. This chain is Large ribosomal subunit protein uL14, found in Idiomarina loihiensis (strain ATCC BAA-735 / DSM 15497 / L2-TR).